Reading from the N-terminus, the 400-residue chain is Acetate kinase (400 aa).

Residue N10 coordinates Mg(2+). K17 is an ATP binding site. R91 is a binding site for substrate. Catalysis depends on D150, which acts as the Proton donor/acceptor. ATP-binding positions include 210 to 214 (HLGNG), 285 to 287 (DCR), and 333 to 337 (GIGEN). E387 contacts Mg(2+).

This sequence belongs to the acetokinase family. As to quaternary structure, homodimer. Requires Mg(2+) as cofactor. Mn(2+) serves as cofactor.

It localises to the cytoplasm. It catalyses the reaction acetate + ATP = acetyl phosphate + ADP. Its pathway is metabolic intermediate biosynthesis; acetyl-CoA biosynthesis; acetyl-CoA from acetate: step 1/2. In terms of biological role, catalyzes the formation of acetyl phosphate from acetate and ATP. Can also catalyze the reverse reaction. This is Acetate kinase from Yersinia pestis bv. Antiqua (strain Antiqua).